The sequence spans 86 residues: Omega-theraphotoxin-Hhn1a 1 (86 aa).

The first 21 residues, M1–A21, serve as a signal peptide directing secretion. The propeptide occupies S22–R50. 3 disulfide bridges follow: C52/C66, C59/C71, and C65/C78.

It belongs to the neurotoxin 10 (Hwtx-1) family. 17 (Hntx-9) subfamily. In terms of tissue distribution, expressed by the venom gland.

The protein resides in the secreted. In terms of biological role, ion channel inhibitor. The sequence is that of Omega-theraphotoxin-Hhn1a 1 from Cyriopagopus hainanus (Chinese bird spider).